A 72-amino-acid chain; its full sequence is Large ribosomal subunit protein bL31 (72 aa).

This sequence belongs to the bacterial ribosomal protein bL31 family. Type A subfamily. In terms of assembly, part of the 50S ribosomal subunit.

In terms of biological role, binds the 23S rRNA. The chain is Large ribosomal subunit protein bL31 from Maricaulis maris (strain MCS10) (Caulobacter maris).